The sequence spans 110 residues: N(4)-acetylcytidine amidohydrolase (110 aa).

The region spanning 6–93 is the ASCH domain; that stretch reads TFFERFEQDI…IQEIYPGLEQ (88 aa). K20 (proton acceptor) is an active-site residue. T23 functions as the Nucleophile in the catalytic mechanism. Catalysis depends on E73, which acts as the Proton donor.

The protein belongs to the N(4)-acetylcytidine amidohydrolase family.

The enzyme catalyses N(4)-acetylcytidine + H2O = cytidine + acetate + H(+). The catalysed reaction is N(4)-acetyl-2'-deoxycytidine + H2O = 2'-deoxycytidine + acetate + H(+). It carries out the reaction N(4)-acetylcytosine + H2O = cytosine + acetate + H(+). Its function is as follows. Catalyzes the hydrolysis of N(4)-acetylcytidine (ac4C). The chain is N(4)-acetylcytidine amidohydrolase from Shewanella sp. (strain ANA-3).